The sequence spans 116 residues: Ig heavy chain V region 3-6 (116 aa).

The N-terminal stretch at 1–18 (MKVLSLLYLLTAIPGILS) is a signal peptide. The framework-1 stretch occupies residues 19–48 (DVQLQESGPGLVKPSQSLSLTCSVTGYSIT). Cys-40 and Cys-114 are joined by a disulfide. Residues 49–53 (SGYYW) are complementarity-determining-1. The tract at residues 54–67 (NWIRQFPGNKLEWM) is framework-2. A complementarity-determining-2 region spans residues 68–84 (GYISYDGSNNYNPSLKN). The interval 85–116 (RISITRDTSKNQFFLKLNSVTTEDTATYYCAR) is framework-3.

In Mus musculus (Mouse), this protein is Ig heavy chain V region 3-6 (Ighv3-6).